Consider the following 236-residue polypeptide: Thrombin-like enzyme kangshuanmei (236 aa).

In terms of domain architecture, Peptidase S1 spans 1–227 (VIGGDECNIN…HLDWIQSIIA (227 aa)). Cystine bridges form between C7–C141, C28–C44, C78–C234, C120–C188, C152–C167, and C178–C203. Residue H43 is the Charge relay system of the active site. N81 carries an N-linked (GlcNAc...) asparagine glycan. The active-site Charge relay system is D88. N-linked (GlcNAc...) asparagine glycans are attached at residues N99 and N148. The Charge relay system role is filled by S182. Residue N229 is glycosylated (N-linked (GlcNAc...) asparagine).

This sequence belongs to the peptidase S1 family. Snake venom subfamily. As to quaternary structure, monomer. N-glycosylated by units composed of Fuc, Man, GlcNAc, Gal and NeuAC residues. As to expression, expressed by the venom gland.

It localises to the secreted. Its activity is regulated as follows. Inhibited by 4-(2-aminoethyl)-benzensulfonyl fluoride. Not inhibited by antithrombin-III. Its function is as follows. Thrombin-like snake venom serine protease. Cleaves bonds after Arg and Lys, converts fibrinogen (FGA and FGB) to fibrin and releases both fibrinopeptides A and B, and fibrinogen peptide Bbeta1-42. Has a blood clotting activity. This Gloydius brevicauda (Korean slamosa snake) protein is Thrombin-like enzyme kangshuanmei.